The primary structure comprises 323 residues: MDRRLDPGLSPYRTFSRAEWAALRRDTPMTLRPDEITRLEGLGVHLSMQEVEEIYLPLSRLLSLYVAATQKLFRAMSYFLDSRDSEANGDGKMPYIIGVAGSVAVGKSTTARVLQALLARWPNTPKVDLVTTDGFLLPNAILEREGLMDKKGFPESYDLPLLLRFLTDIKAGRRPVRAPLYSHFFYDVMPDQYVEIDRPDILIVEGLNVLQTTRPPKDGKAIPFVSDFFDFSVYIDGDEDVIERWYVERFMRLRATAFKDPLSYFHRYSQLTEEQARATALSIWRGINLPNLMDNVLPTRQRADLILRKTGEHEVAEVSLRRL.

Residue 101-108 coordinates ATP; that stretch reads GSVAVGKS.

The protein belongs to the prokaryotic pantothenate kinase family.

Its subcellular location is the cytoplasm. It carries out the reaction (R)-pantothenate + ATP = (R)-4'-phosphopantothenate + ADP + H(+). The protein operates within cofactor biosynthesis; coenzyme A biosynthesis; CoA from (R)-pantothenate: step 1/5. In Xanthobacter autotrophicus (strain ATCC BAA-1158 / Py2), this protein is Pantothenate kinase.